The chain runs to 348 residues: A-type ATP synthase subunit C (348 aa).

Belongs to the V-ATPase V0D/AC39 subunit family. Has multiple subunits with at least A(3), B(3), C, D, E, F, H, I and proteolipid K(x).

The protein localises to the cell membrane. Component of the A-type ATP synthase that produces ATP from ADP in the presence of a proton gradient across the membrane. The polypeptide is A-type ATP synthase subunit C (Halorubrum lacusprofundi (strain ATCC 49239 / DSM 5036 / JCM 8891 / ACAM 34)).